Consider the following 473-residue polypeptide: Cytochrome c-552 (473 aa).

Residues 1–33 (MQHGDEMMKKMTGKSFALSALVAASFMAAGAMA) form the signal peptide. Histidine 93 is a heme c binding site. Cysteine 121, cysteine 124, and lysine 125 together coordinate heme. Residues cysteine 159, cysteine 162, histidine 163, cysteine 201, cysteine 204, and histidine 205 each coordinate heme c. Positions 207, 208, 256, and 258 each coordinate Ca(2+). Tyrosine 208 contributes to the substrate binding site. Residue histidine 259 coordinates substrate. Heme c is bound by residues histidine 270, cysteine 277, cysteine 280, histidine 281, histidine 296, cysteine 309, cysteine 312, histidine 313, and histidine 388.

This sequence belongs to the cytochrome c-552 family. Ca(2+) serves as cofactor. The cofactor is heme c.

Its subcellular location is the periplasm. It catalyses the reaction 6 Fe(III)-[cytochrome c] + NH4(+) + 2 H2O = 6 Fe(II)-[cytochrome c] + nitrite + 8 H(+). Its pathway is nitrogen metabolism; nitrate reduction (assimilation). Catalyzes the reduction of nitrite to ammonia, consuming six electrons in the process. The chain is Cytochrome c-552 from Shewanella sp. (strain ANA-3).